A 368-amino-acid polypeptide reads, in one-letter code: 3-dehydroquinate synthase (368 aa).

It belongs to the archaeal-type DHQ synthase family.

The catalysed reaction is 2-amino-2,3,7-trideoxy-D-lyxo-hept-6-ulosonate + NAD(+) + H2O = 3-dehydroquinate + NH4(+) + NADH + H(+). In terms of biological role, catalyzes the oxidative deamination and cyclization of 2-amino-3,7-dideoxy-D-threo-hept-6-ulosonic acid (ADH) to yield 3-dehydroquinate (DHQ), which is fed into the canonical shikimic pathway of aromatic amino acid biosynthesis. This is 3-dehydroquinate synthase from Methanobrevibacter smithii (strain ATCC 35061 / DSM 861 / OCM 144 / PS).